A 500-amino-acid chain; its full sequence is Centrosomal protein of 57 kDa (500 aa).

A compositionally biased stretch (low complexity) spans M1–S16. A disordered region spans residues M1 to F59. Polar residues predominate over residues S22–P35. S53 carries the post-translational modification Phosphoserine. Residues T58–E239 form a centrosome localization domain (CLD) region. Positions E63–R242 form a coiled coil. Disordered regions lie at residues S256 to T275 and Q432 to L478. The mediates interaction with microtubules stretch occupies residues G278–L491. The stretch at T389–S449 forms a coiled coil. Composition is skewed to basic and acidic residues over residues Q432–D444 and S461–R475.

The protein belongs to the translokin family. Interacts with FGF2 and RAP80. Does not interact with FGF1 or FGF2 isoform 24 kDa. Homodimer and homooligomer. Interacts with microtubules. In terms of tissue distribution, ubiquitous (at protein level). Expressed in testis, predominantly in round spermatids. Low expression is detected in other tissues.

The protein resides in the nucleus. It is found in the cytoplasm. The protein localises to the cytoskeleton. It localises to the microtubule organizing center. Its subcellular location is the centrosome. Functionally, centrosomal protein which may be required for microtubule attachment to centrosomes. May act by forming ring-like structures around microtubules. Mediates nuclear translocation and mitogenic activity of the internalized growth factor FGF2. The sequence is that of Centrosomal protein of 57 kDa (Cep57) from Mus musculus (Mouse).